Here is a 446-residue protein sequence, read N- to C-terminus: MATFKEHLQERSAHSIGRVNAHGYEDSNFLLTKLTENKMSCPMTISMLAPTLGTVGRINEESRTRRNAGYPINFEFDFGPVIEFLNMRLNNAGDPFMECNYGIHSKKFEIAVLDWFARLWELPKDQYWGYVTSGGTEGNMHGLLVGRELFPEGIIYTSCDSHYSIFKAAKMYRVQCIKIDTLFSGEMDYADFRRKLLQNTRSPAIVNVNIGTTMKGAVDDLDEVVMILENCGFANRFYIHCDSALVGLMMPFIKQAPKLTFKKPIGSICISGHKFIGCPIPCGVLITRLMDINHVMSTNIEYISSNDTTIAGSRNGHAPIFLWYALKRIGYNGLCKTVENCLKNAQYLALRLREMGVSVFLNALSITVVFERPNDETFVRKWQLACQGKIAHVVVMPNVSLERINMFLEEFTKSRIALHQDKCVAGDVSQENCLCSLHLDRKKEAV.

His162 lines the substrate pocket. An N6-(pyridoxal phosphate)lysine modification is found at Lys274.

Belongs to the group II decarboxylase family. It depends on pyridoxal 5'-phosphate as a cofactor.

The enzyme catalyses L-serine + H(+) = ethanolamine + CO2. In terms of biological role, catalyzes the biosynthesis of ethanolamine from serine. Decarboxylation of free serine is the major source of ethanolamine production in plants and ethanolamine metabolism is crucial for the synthesis of choline, phosphatidylethanolamine (PE) and phosphatidylcholine (PC), and thus for plant growth. The chain is Serine decarboxylase 3 from Oryza sativa subsp. japonica (Rice).